The chain runs to 146 residues: Probable acetyltransferase HI_0677 (146 aa).

An N-acetyltransferase domain is found at 1-146 (MKLFKAEQWN…ERLFELSLSC (146 aa)).

This Haemophilus influenzae (strain ATCC 51907 / DSM 11121 / KW20 / Rd) protein is Probable acetyltransferase HI_0677.